The primary structure comprises 345 residues: Heat-inducible transcription repressor HrcA (345 aa).

The protein belongs to the HrcA family.

Its function is as follows. Negative regulator of class I heat shock genes (grpE-dnaK-dnaJ and groELS operons). Prevents heat-shock induction of these operons. In Desulfitobacterium hafniense (strain DSM 10664 / DCB-2), this protein is Heat-inducible transcription repressor HrcA.